The following is a 513-amino-acid chain: MQIVETTNEGLKRAYTVTIPAADIAARVEGEIKKIAPQVRMPGFRPGKVPANLVRKMHGPALHQEALQTTIREAMDKLVADNKLRPAMQPAVSLGEGYDEGKDAELTVELEVLPQIEAPSLDGLKLEKLVVPVTEAEVDEAVARIGQGQKSFTDAKKGAKAKDGDQIIIDFLGKVDGVAFEGGAAEDTPLELGAGRFIPGFEEQLVGVKVGDEKTITVTFPEDYPAENLKGKEATFDITVKAVKNAGEFEANDEFAKMLGLESLEQLKTLLRGQLEQETAGLTRTQMKRALLDQLAAGHDFAVPPSMVEAEFEQIWAQLQQEAQREENPEEALKEIEAEKDDYRKIAERRVRLGLLLSEIGQANGVQVTSQEMEMLIRQAAQQYREQDRQRFVDYVRSEPLAAAQLRAPLYEDKVVDFLFDKAEVTEREVTREELQAAIEAEEGAAAEAKPAKKAPAKKKAAKEEAPAEEAAAEEKPKKAAPKKKAAAADEAPAAEEAPAAKKKAPAKKKAEG.

Positions 164–249 (GDQIIIDFLG…VKAVKNAGEF (86 aa)) constitute a PPIase FKBP-type domain. A disordered region spans residues 436 to 513 (QAAIEAEEGA…KAPAKKKAEG (78 aa)). A compositionally biased stretch (basic residues) spans 452-461 (AKKAPAKKKA). A compositionally biased stretch (low complexity) spans 489-498 (ADEAPAAEEA). Over residues 501–513 (AKKKAPAKKKAEG) the composition is skewed to basic residues.

It belongs to the FKBP-type PPIase family. Tig subfamily.

It is found in the cytoplasm. It carries out the reaction [protein]-peptidylproline (omega=180) = [protein]-peptidylproline (omega=0). Functionally, involved in protein export. Acts as a chaperone by maintaining the newly synthesized protein in an open conformation. Functions as a peptidyl-prolyl cis-trans isomerase. This Novosphingobium aromaticivorans (strain ATCC 700278 / DSM 12444 / CCUG 56034 / CIP 105152 / NBRC 16084 / F199) protein is Trigger factor.